Consider the following 429-residue polypeptide: Adenosylhomocysteinase (429 aa).

Residues Thr-64, Asp-136, and Glu-161 each coordinate substrate. NAD(+) is bound at residue 162–164; sequence TTT. 2 residues coordinate substrate: Lys-191 and Asp-195. NAD(+) contacts are provided by residues Asn-196, 225-230, Glu-248, Asn-283, 304-306, and Asn-351; these read GYGWCG and SGH.

This sequence belongs to the adenosylhomocysteinase family. The cofactor is NAD(+).

The protein resides in the cytoplasm. The catalysed reaction is S-adenosyl-L-homocysteine + H2O = L-homocysteine + adenosine. It participates in amino-acid biosynthesis; L-homocysteine biosynthesis; L-homocysteine from S-adenosyl-L-homocysteine: step 1/1. In terms of biological role, may play a key role in the regulation of the intracellular concentration of adenosylhomocysteine. The sequence is that of Adenosylhomocysteinase from Gloeothece citriformis (strain PCC 7424) (Cyanothece sp. (strain PCC 7424)).